The following is a 336-amino-acid chain: F420-dependent glucose-6-phosphate dehydrogenase (336 aa).

Aspartate 39 is a binding site for coenzyme F420-(gamma-Glu)n. Catalysis depends on histidine 40, which acts as the Proton donor. Residues threonine 76 and 107–108 (TG) each bind coenzyme F420-(gamma-Glu)n. The active-site Proton acceptor is the glutamate 109. Coenzyme F420-(gamma-Glu)n-binding positions include asparagine 112, 177 to 178 (GG), and 180 to 181 (LV). Substrate-binding residues include threonine 195, lysine 198, lysine 259, and arginine 283.

Belongs to the F420-dependent glucose-6-phosphate dehydrogenase family. In terms of assembly, homodimer.

The enzyme catalyses oxidized coenzyme F420-(gamma-L-Glu)(n) + D-glucose 6-phosphate + H(+) = 6-phospho-D-glucono-1,5-lactone + reduced coenzyme F420-(gamma-L-Glu)(n). Functionally, catalyzes the coenzyme F420-dependent oxidation of glucose 6-phosphate (G6P) to 6-phosphogluconolactone. The chain is F420-dependent glucose-6-phosphate dehydrogenase from Nocardia farcinica (strain IFM 10152).